The primary structure comprises 333 residues: Fatty acid hydroxylase domain-containing protein 2 (333 aa).

Transmembrane regions (helical) follow at residues 29–49 (FILG…TWHL), 77–97 (ILFF…FNGL), 134–154 (TVLF…YPFL), 168–188 (FHWF…LFYY), 215–235 (VISL…PVIV), and 237–257 (PLVM…ALII). The Fatty acid hydroxylase domain maps to 176–299 (AIFTLIEEVL…LGVLDHLHGT (124 aa)).

Belongs to the sterol desaturase family. Down-regulated in primary acute myeloid leukemia (AML) patients.

Its subcellular location is the cytoplasm. It is found in the membrane. Promotes megakaryocyte differentiation by enhancing ERK phosphorylation and up-regulating RUNX1 expression. The polypeptide is Fatty acid hydroxylase domain-containing protein 2 (FAXDC2) (Homo sapiens (Human)).